Here is a 416-residue protein sequence, read N- to C-terminus: Vacuole membrane protein KMS1 (416 aa).

Glycine 2 is modified (N-acetylglycine). Residues 2-60 are Cytoplasmic-facing; it reads GSAGVASSSSDVAISALREKHEKEVENLTLTTQPLNTLKLFVEATIQYIKRSISYLLAH. The chain crosses the membrane as a helical span at residues 61–81; it reads GGWFILITTLLVVSGGLLVTV. Over 82-101 the chain is Lumenal; it reads DGPHGKHVEEVLEYVRYGLW. Residues 102–124 form a helical membrane-spanning segment; sequence WIALGVASSIGLGSGLHTFVLYL. The Cytoplasmic portion of the chain corresponds to 125 to 257; it reads GPHIALFTLK…WLLTHSQHLN (133 aa). The chain crosses the membrane as a helical span at residues 258–278; it reads FFTVLVLASVPNPLFDLAGIM. Residues 279 to 289 are Lumenal-facing; the sequence is CGQFGIPFWEF. The helical transmembrane segment at 290-312 threads the bilayer; that stretch reads FLATLIGKAIIKTHIQTIFIICV. The Cytoplasmic segment spans residues 313 to 323; the sequence is CNNQLLDWMEN. The helical transmembrane segment at 324–344 threads the bilayer; sequence ELIWILSHVPGLASMLPGLTA. Residues 345–372 lie on the Lumenal side of the membrane; the sequence is KLHAMKEKYIDAPSPVPSHIKVKKWDFS. A helical membrane pass occupies residues 373 to 393; it reads FASIWNGIVWLMLLNFFVKIV. Residues 394–416 lie on the Cytoplasmic side of the membrane; sequence TATAQRHLKKKQEKEMATLTHSD.

It belongs to the VMP1 family.

Its subcellular location is the endoplasmic reticulum membrane. Involved in the early secretory pathway. Required for the correct export of secretory products from the endoplasmic reticulum (ER) and involved in the maintenance of ER integrity. In Arabidopsis thaliana (Mouse-ear cress), this protein is Vacuole membrane protein KMS1.